The primary structure comprises 22 residues: Unknown protein 20 from 2D-PAGE (22 aa).

This is Unknown protein 20 from 2D-PAGE from Bombyx mori (Silk moth).